The chain runs to 192 residues: Casparian strip membrane protein 1 (192 aa).

Over 1–30 (MSTTVDVPESSNVAKGKAIAVARPGGWKKG) the chain is Cytoplasmic. A helical membrane pass occupies residues 31–51 (LAIMDFILRLGGIAASLGAAA). Residues 52–80 (TMGTSDQTLPFFTQFFQFEASYDSFTTFQ) lie on the Extracellular side of the membrane. Residues 81–101 (FFVITMALVAGYLVLSLPFSV) traverse the membrane as a helical segment. Topologically, residues 102-113 (VAIIRPHAPGPR) are cytoplasmic. The helical transmembrane segment at 114 to 134 (LFLIILDTVFLTLATASGASA) threads the bilayer. Over 135-166 (AAIVYLAHNGNQDSNWLAICNQFGDFCAQTSG) the chain is Extracellular. A helical transmembrane segment spans residues 167–187 (AVVASFVAVVILVLLVIMSAL). Residues 188–192 (ALRRH) lie on the Cytoplasmic side of the membrane.

It belongs to the Casparian strip membrane proteins (CASP) family. Homodimer and heterodimers.

It localises to the cell membrane. Functionally, regulates membrane-cell wall junctions and localized cell wall deposition. Required for establishment of the Casparian strip membrane domain (CSD) and the subsequent formation of Casparian strips, a cell wall modification of the root endodermis that determines an apoplastic barrier between the intraorganismal apoplasm and the extraorganismal apoplasm and prevents lateral diffusion. The polypeptide is Casparian strip membrane protein 1 (Vigna unguiculata (Cowpea)).